We begin with the raw amino-acid sequence, 325 residues long: Cyclic AMP-responsive element-binding protein 1 (325 aa).

Composition is skewed to polar residues over residues 1–11 (MESGAENQQSG) and 18–27 (AESQQMTVQA). 2 disordered regions span residues 1 to 27 (MESG…TVQA) and 92 to 111 (SEDS…RREI). The KID domain maps to 85-144 (QISTIAESEDSQESVDSVTDSQKRREILSRRPSYRKILNDLSSDAPGVPRIEEEKSEEET). The residue at position 117 (S117) is a Phosphoserine; by CaMK1, CaMK2, CaMK4, PKB/AKT1 or PKB/AKT2, RPS6KA3, RPS6KA4, RPS6KA5 and SGK1. A Glycyl lysine isopeptide (Lys-Gly) (interchain with G-Cter in SUMO2) cross-link involves residue K120. A disordered region spans residues 124-146 (DLSSDAPGVPRIEEEKSEEETSA). S126 carries the phosphoserine; by CaMK2 modification. S255 carries the post-translational modification Phosphoserine; by HIPK2. One can recognise a bZIP domain in the interval 267-325 (ARKREVRLMKNREAARECRRKKKEYVKCLENRVAVLENQNKTLIEELKALKDLYCHKSD). A basic motif region spans residues 268–293 (RKREVRLMKNREAARECRRKKKEYVK). Glycyl lysine isopeptide (Lys-Gly) (interchain with G-Cter in SUMO1) cross-links involve residues K269 and K288. The interval 295–316 (LENRVAVLENQNKTLIEELKAL) is leucine-zipper.

Belongs to the bZIP family. In terms of assembly, interacts with PPRC1. Binds DNA as a dimer. This dimer is stabilized by magnesium ions. Interacts, through the bZIP domain, with the coactivators CRTC1/TORC1, CRTC2/TORC2 and CRTC3/TORC3. When phosphorylated on Ser-117, binds CREBBP. Interacts with CREBL2; regulates CREB1 phosphorylation, stability and transcriptional activity. Interacts (phosphorylated form) with TOX3. Interacts with ARRB1. Binds to HIPK2. Interacts with SGK1. Interacts with TSSK4; this interaction facilitates phosphorylation on Ser-117. Forms a complex with KMT2A and CREBBP. Interacts with TOX4; CREB1 is required for full induction of TOX4-dependent activity and the interaction is increased by cAMP and inhibited by insulin. Sumoylated with SUMO1. Sumoylation on Lys-288, but not on Lys-269, is required for nuclear localization of this protein. Sumoylation is enhanced under hypoxia, promoting nuclear localization and stabilization. Post-translationally, stimulated by phosphorylation. Phosphorylation of both Ser-117 and Ser-126 in the SCN regulates the activity of CREB and participates in circadian rhythm generation. Phosphorylation of Ser-117 allows CREBBP binding. Phosphorylated upon calcium influx by CaMK4 and CaMK2 on Ser-117. CaMK4 is much more potent than CaMK2 in activating CREB. Phosphorylated by CaMK2 on Ser-126. Phosphorylation of Ser-126 blocks CREB-mediated transcription even when Ser-117 is phosphorylated. Phosphorylated by CaMK1. Phosphorylation of Ser-255 by HIPK2 in response to genotoxic stress promotes CREB1 activity, facilitating the recruitment of the coactivator CBP. Phosphorylated at Ser-117 by RPS6KA3, RPS6KA4 and RPS6KA5 in response to mitogenic or stress stimuli. CREBL2 positively regulates phosphorylation at Ser-117 thereby stimulating CREB1 transcriptional activity. In liver, phosphorylation is induced by fasting or glucagon in a circadian fashion. Phosphorylated by TSSK4 on Ser-117.

Its subcellular location is the nucleus. In terms of biological role, phosphorylation-dependent transcription factor that stimulates transcription upon binding to the DNA cAMP response element (CRE), a sequence present in many viral and cellular promoters. Transcription activation is enhanced by the TORC coactivators which act independently of Ser-117 phosphorylation. Involved in different cellular processes including the synchronization of circadian rhythmicity and the differentiation of adipose cells. Regulates the expression of apoptotic and inflammatory response factors in cardiomyocytes in response to ERFE-mediated activation of AKT signaling. This chain is Cyclic AMP-responsive element-binding protein 1 (CREB1), found in Bos taurus (Bovine).